The chain runs to 376 residues: Succinyl-diaminopimelate desuccinylase (376 aa).

Histidine 67 lines the Zn(2+) pocket. Residue aspartate 69 is part of the active site. Aspartate 100 contributes to the Zn(2+) binding site. Catalysis depends on glutamate 134, which acts as the Proton acceptor. Residues glutamate 135, glutamate 163, and histidine 349 each coordinate Zn(2+).

It belongs to the peptidase M20A family. DapE subfamily. As to quaternary structure, homodimer. Zn(2+) serves as cofactor. The cofactor is Co(2+).

The catalysed reaction is N-succinyl-(2S,6S)-2,6-diaminopimelate + H2O = (2S,6S)-2,6-diaminopimelate + succinate. It participates in amino-acid biosynthesis; L-lysine biosynthesis via DAP pathway; LL-2,6-diaminopimelate from (S)-tetrahydrodipicolinate (succinylase route): step 3/3. In terms of biological role, catalyzes the hydrolysis of N-succinyl-L,L-diaminopimelic acid (SDAP), forming succinate and LL-2,6-diaminopimelate (DAP), an intermediate involved in the bacterial biosynthesis of lysine and meso-diaminopimelic acid, an essential component of bacterial cell walls. The polypeptide is Succinyl-diaminopimelate desuccinylase (Idiomarina loihiensis (strain ATCC BAA-735 / DSM 15497 / L2-TR)).